A 108-amino-acid chain; its full sequence is Hydrogenase expression/formation protein HupN (108 aa).

Residues 88–108 form a disordered region; it reads REPQLPPHLQAQLPPKEPNSP.

It belongs to the HupF/HypC family.

This is Hydrogenase expression/formation protein HupN (hupN) from Azotobacter chroococcum mcd 1.